A 266-amino-acid chain; its full sequence is Hydroxyethylthiazole kinase (266 aa).

Met-43 contacts substrate. ATP-binding residues include Arg-119 and Thr-166. Gly-193 contributes to the substrate binding site.

The protein belongs to the Thz kinase family. The cofactor is Mg(2+).

It carries out the reaction 5-(2-hydroxyethyl)-4-methylthiazole + ATP = 4-methyl-5-(2-phosphooxyethyl)-thiazole + ADP + H(+). The protein operates within cofactor biosynthesis; thiamine diphosphate biosynthesis; 4-methyl-5-(2-phosphoethyl)-thiazole from 5-(2-hydroxyethyl)-4-methylthiazole: step 1/1. Catalyzes the phosphorylation of the hydroxyl group of 4-methyl-5-beta-hydroxyethylthiazole (THZ). The protein is Hydroxyethylthiazole kinase of Methanococcus vannielii (strain ATCC 35089 / DSM 1224 / JCM 13029 / OCM 148 / SB).